The following is a 318-amino-acid chain: Ficolin-1-B (318 aa).

A signal peptide spans 1-19; the sequence is MTRWVQTFLLLVAVIRSYA. In terms of domain architecture, Collagen-like spans 42-99; it reads GCPGIPGVPGPQGPSGPAGAKGEKGFPGIPGKMGPTGLKGERGISGPKGQKGDKGDPG. A Fibrinogen C-terminal domain is found at 100-318; sequence IPVVGMAQNC…VSEIKFRPQP (219 aa). Cys-109 and Cys-137 are oxidised to a cystine. Asn-205 and Asn-222 each carry an N-linked (GlcNAc...) asparagine glycan. Ca(2+) is bound at residue Asp-253. N-linked (GlcNAc...) asparagine glycosylation occurs at Asn-254. Residues Asp-255 and Ser-257 each coordinate Ca(2+). A disulfide bridge links Cys-261 with Cys-274. 273–275 provides a ligand contact to a carbohydrate; that stretch reads SCH. Asn-287 carries N-linked (GlcNAc...) asparagine glycosylation.

Belongs to the ficolin lectin family. As to quaternary structure, homotrimer. May form higher-order oligomers. N-glycosylated. In terms of tissue distribution, expressed in peripheral blood leukocytes. Also detected at lower levels in spleen and lung.

Its subcellular location is the secreted. Its function is as follows. May function in innate immunity through activation of the lectin complement pathway. Binds to GalNAc and GlcNAc carbohydrate moieties. In Xenopus laevis (African clawed frog), this protein is Ficolin-1-B.